A 947-amino-acid polypeptide reads, in one-letter code: Bromodomain testis-specific protein (947 aa).

The Bromo 1 domain maps to 27 to 133 (RLTNQLQYLQ…KLFMQKLSQM (107 aa)). Position 109 (Asn-109) interacts with JQ1. Ser-187 carries the post-translational modification Phosphoserine. The tract at residues 202-228 (QTAAQVTKGVKRKADTTTPATSAVKAS) is disordered. A Nuclear localization signal motif is present at residues 209-220 (KGVKRKADTTTP). A compositionally biased stretch (polar residues) spans 217 to 228 (TTTPATSAVKAS). Residues 267 to 376 (VKVTEQLRHC…DVFETHFSKI (110 aa)) enclose the Bromo 2 domain. Disordered stretches follow at residues 395 to 420 (ETTGRENTNEASSEGNSSDDSEDERV), 444 to 511 (PFRK…KPMN), 610 to 698 (NNQL…IPPE), and 882 to 924 (NKCS…RRRE). Residues 417-470 (DERVKRLAKLQEQLKAVHQQLQVLSQVPFRKLNKKKEKSKKEKKKEKVNNSNEN) adopt a coiled-coil conformation. Basic residues predominate over residues 447-462 (KLNKKKEKSKKEKKKE). The span at 470 to 481 (NPRKMCEQMRLK) shows a compositional bias: basic and acidic residues. Basic residues predominate over residues 482 to 494 (EKSKRNQPKKRKQ). The NET domain maps to 500–582 (KSEDEDNAKP…ACLRKRPLKP (83 aa)). Positions 591-621 (KEELHSQKKQELEKRLLDVNNQLNSRKRQTK) form a coiled coil. A compositionally biased stretch (low complexity) spans 637–662 (LSESSSSSSSSSESESSSSDLSSSDS). Composition is skewed to basic and acidic residues over residues 674–692 (TEVKPNDSPSKENVKKMKN) and 885–924 (SGEEQKEHQQSSEAQDKSKLWLLKDRDLARQKEQERRRRE).

The protein belongs to the BET family. In terms of assembly, interacts with mRNA splicing machinery proteins SRSF2, DDX5, HNRNPK and TARDBP. Interacts with the acetylated N-terminus of histone H1, H2, H3 and H4. Interacts with P-TEFb components CDK9 and CCNT1/cyclin-T1. Interacts with SMARCE1. Interacts with the acetylated N-terminus of histone H1.4, H2A, H2B, H3 and H4. Ubiquitinated in a SPOP-dependent manner, leading to proteasomal degradation. In terms of tissue distribution, testis-specific. A 3-fold higher expression is seen in adult testis than in embryo testis. Expression seems to be correlated with histone H4 hyperacetylation during the haploid phase of spermatogenesis (spermiogenesis). No expression, or very low expression is seen in patients' testes with abnormal spermatogenesis. Expressed in cancers such as non-small cell lung cancer and squamous cell carcinomas of the head and neck as well as of esophagus, but not in melanoma or in cancers of the colon, breast, kidney and bladder.

The protein resides in the nucleus. Testis-specific chromatin protein that specifically binds histone H4 acetylated at 'Lys-5' and 'Lys-8' (H4K5ac and H4K8ac, respectively) and plays a key role in spermatogenesis. Required in late pachytene spermatocytes: plays a role in meiotic and post-meiotic cells by binding to acetylated histones at the promoter of specific meiotic and post-meiotic genes, facilitating their activation at the appropriate time. In the post-meiotic phase of spermatogenesis, binds to hyperacetylated histones and participates in their general removal from DNA. Also recognizes and binds a subset of butyrylated histones: able to bind histone H4 butyrylated at 'Lys-8' (H4K8ac), while it is not able to bind H4 butyrylated at 'Lys-5' (H4K5ac). Also acts as a component of the splicing machinery in pachytene spermatocytes and round spermatids and participates in 3'-UTR truncation of specific mRNAs in post-meiotic spermatids. Required for chromocenter organization, a structure comprised of peri-centromeric heterochromatin. This is Bromodomain testis-specific protein (BRDT) from Homo sapiens (Human).